We begin with the raw amino-acid sequence, 123 residues long: Large ribosomal subunit protein bL12 (123 aa).

It belongs to the bacterial ribosomal protein bL12 family. Homodimer. Part of the ribosomal stalk of the 50S ribosomal subunit. Forms a multimeric L10(L12)X complex, where L10 forms an elongated spine to which 2 to 4 L12 dimers bind in a sequential fashion. Binds GTP-bound translation factors.

Functionally, forms part of the ribosomal stalk which helps the ribosome interact with GTP-bound translation factors. Is thus essential for accurate translation. The polypeptide is Large ribosomal subunit protein bL12 (Dechloromonas aromatica (strain RCB)).